A 385-amino-acid polypeptide reads, in one-letter code: WD repeat-containing protein RUP1 (385 aa).

7 WD repeats span residues Thr-69–Asp-108, Cys-119–Glu-160, Glu-163–Glu-205, Gly-210–Ile-250, Gly-254–Arg-292, Val-298–Val-337, and Ser-348–Ser-385.

As to quaternary structure, interacts with UVR8. Interacts directly with DHU1.

The protein resides in the nucleus. Its subcellular location is the cytoplasm. It is found in the cytosol. In terms of biological role, functions in association with RUP2 as repressor of UV-B-induced photomorphogenesis mediated by UVR8 and HY5, likely in coordination with DHU1. Plays a crucial negative feedback regulatory role downstream of UVR8-COP1 to inhibit UVR8 function, balance UV-B-specific responses and ensure normal plant growth. Is involved in the regulation of photoperiodic flowering and vegetative development. The sequence is that of WD repeat-containing protein RUP1 from Arabidopsis thaliana (Mouse-ear cress).